Here is a 468-residue protein sequence, read N- to C-terminus: Glutamate--tRNA ligase (468 aa).

Positions 8-18 (PSPTGFLHVGG) match the 'HIGH' region motif. Zn(2+)-binding residues include Cys-97, Cys-99, Cys-124, and Asp-126. A 'KMSKS' region motif is present at residues 236–240 (KLSKR). Residue Lys-239 coordinates ATP.

The protein belongs to the class-I aminoacyl-tRNA synthetase family. Glutamate--tRNA ligase type 1 subfamily. Monomer. The cofactor is Zn(2+).

It is found in the cytoplasm. The catalysed reaction is tRNA(Glu) + L-glutamate + ATP = L-glutamyl-tRNA(Glu) + AMP + diphosphate. In terms of biological role, catalyzes the attachment of glutamate to tRNA(Glu) in a two-step reaction: glutamate is first activated by ATP to form Glu-AMP and then transferred to the acceptor end of tRNA(Glu). This Francisella tularensis subsp. holarctica (strain FTNF002-00 / FTA) protein is Glutamate--tRNA ligase.